The chain runs to 160 residues: Transcription elongation factor GreA (160 aa).

Belongs to the GreA/GreB family.

Functionally, necessary for efficient RNA polymerase transcription elongation past template-encoded arresting sites. The arresting sites in DNA have the property of trapping a certain fraction of elongating RNA polymerases that pass through, resulting in locked ternary complexes. Cleavage of the nascent transcript by cleavage factors such as GreA or GreB allows the resumption of elongation from the new 3'terminus. GreA releases sequences of 2 to 3 nucleotides. This Francisella philomiragia subsp. philomiragia (strain ATCC 25017 / CCUG 19701 / FSC 153 / O#319-036) protein is Transcription elongation factor GreA.